A 469-amino-acid polypeptide reads, in one-letter code: Cell division protein FtsP (469 aa).

Positions 1-27 (MKLSRRQFLQRSTLAGVATVTPTSLWA) form a signal peptide, tat-type signal.

This sequence belongs to the FtsP family. In terms of processing, predicted to be exported by the Tat system. The position of the signal peptide cleavage has not been experimentally proven.

It localises to the periplasm. In terms of biological role, cell division protein that is required for growth during stress conditions. May be involved in protecting or stabilizing the divisomal assembly under conditions of stress. The protein is Cell division protein FtsP of Glaesserella parasuis serovar 5 (strain SH0165) (Haemophilus parasuis).